A 90-amino-acid polypeptide reads, in one-letter code: Trp-8 progonadoliberin (90 aa).

The signal sequence occupies residues 1 to 24; it reads MSRHVTVVLLLAVVLLLSSHMSHG. Gln-25 bears the Pyrrolidone carboxylic acid mark. Residue Gly-34 is modified to Glycine amide.

Belongs to the GnRH family. Expressed in forebrain but not in testis, ovary, kidney and liver.

It localises to the secreted. Functionally, stimulates the secretion of gonadotropins. The polypeptide is Trp-8 progonadoliberin (Rana dybowskii (Dybovsky's frog)).